The chain runs to 166 residues: Interleukin-2 (166 aa).

A signal peptide spans 1 to 20 (MYSMQLASCVTLTLVLLVNS). Thr-23 carries an O-linked (GalNAc...) threonine glycan. An intrachain disulfide couples Cys-89 to Cys-137.

Belongs to the IL-2 family.

It is found in the secreted. In terms of biological role, cytokine produced by activated CD4-positive helper T-cells and to a lesser extend activated CD8-positive T-cells and natural killer (NK) cells that plays pivotal roles in the immune response and tolerance. Binds to a receptor complex composed of either the high-affinity trimeric IL-2R (IL2RA/CD25, IL2RB/CD122 and IL2RG/CD132) or the low-affinity dimeric IL-2R (IL2RB and IL2RG). Interaction with the receptor leads to oligomerization and conformation changes in the IL-2R subunits resulting in downstream signaling starting with phosphorylation of JAK1 and JAK3. In turn, JAK1 and JAK3 phosphorylate the receptor to form a docking site leading to the phosphorylation of several substrates including STAT5. This process leads to activation of several pathways including STAT, phosphoinositide-3-kinase/PI3K and mitogen-activated protein kinase/MAPK pathways. Functions as a T-cell growth factor and can increase NK-cell cytolytic activity as well. Promotes strong proliferation of activated B-cells and subsequently immunoglobulin production. Plays a pivotal role in regulating the adaptive immune system by controlling the survival and proliferation of regulatory T-cells, which are required for the maintenance of immune tolerance. Moreover, participates in the differentiation and homeostasis of effector T-cell subsets, including Th1, Th2, Th17 as well as memory CD8-positive T-cells. This Mus spretus (Western Mediterranean mouse) protein is Interleukin-2 (Il2).